The primary structure comprises 404 residues: MHC class I-like protein MILL1 (404 aa).

The N-terminal stretch at 1–30 (MMLSRDLRAEAAVRLWIMFLLLEDLLGACA) is a signal peptide. An alpha-1 region spans residues 59–150 (EVAGPHTLRY…VTGQKGQDKG (92 aa)). N-linked (GlcNAc...) asparagine glycosylation is found at Asn-98, Asn-102, and Asn-165. The segment at 151–242 (LHILQATLGC…SLRSEPLDTG (92 aa)) is alpha-2. Disulfide bonds link Cys-160–Cys-223 and Cys-262–Cys-322. The Ig-like C1-type domain occupies 224-338 (PAQLQRHLAS…GNIEKRAVIV (115 aa)). The tract at residues 243–342 (SPMVIVTFRN…KRAVIVNTVS (100 aa)) is alpha-3. Asn-323 carries an N-linked (GlcNAc...) asparagine glycan. The interval 343 to 373 (GEKTRQPSTSGVGGRVKKSLWTTMTTAFMVT) is connecting peptide. Ser-374 carries the GPI-anchor amidated serine lipid modification. Residues 375–404 (WTRKTGGDSTLLLLWWLLFFSTVLAVLTLV) constitute a propeptide, removed in mature form.

The protein belongs to the MHC class I family. Heterodimer with B2M. In terms of tissue distribution, detected in skin, esophagus, tongue, skin, muscle, uterus, ovary, testis and epididymis.

Its subcellular location is the cell membrane. The sequence is that of MHC class I-like protein MILL1 from Rattus norvegicus (Rat).